The chain runs to 536 residues: MLLSQNVSAIGPLNLYPMVHISLVFGISYVVPDLSDESCTLKMRFRNFQSILSWELKNRSIVPTHYTLWYTIMSKPEDMKVVKDCINITRSFCDLTDVWVNRTDMYISQVVGYRENAVVVSCMGSFFLASDKPLDPPKFEIVDFTNNISVNVKFRLDSPRIPSEELQFYLAFIEEHAGNSVKRHQPQITGNITENFNYVIDKLIPNTNYCISVYFEPKDPRKINRSPLKCILFRPRRESESSEPATIGGILILFLLAAVCISTVMILKRIGYICLRNDFPEALNFYKLSVWVFPELPPLEKMATVEVIHITRKKKEWNYNYDDESDIENEVAPRVNSGGYTKHGLTGRLCPTSTTAASLEDCSLEDCSLEDCSDPSAEEPYLPEPKRDAETPAAPGPGPWQSEGTGGGYQTRGTLWQDPTSEEDSDSTEGSEGRIVFNVNLNSVCVRALEDDKDSEVTLMSPSPPEETAVLEEDLSETESSLLVASEEGTQLPFTDPSMECLRPQDALSDKSDTSESDVDIGDGYIVRQVNLKNFN.

Positions M1–G26 are cleaved as a signal peptide. At I27–T246 the chain is on the extracellular side. Cystine bridges form between C39–C122 and C85–C93. N58, N87, N101, N147, and N191 each carry an N-linked (GlcNAc...) asparagine glycan. Residues C210 and C230 are joined by a disulfide bond. The chain crosses the membrane as a helical span at residues I247 to L267. Over K268–N536 the chain is Cytoplasmic. Phosphotyrosine is present on Y340. Tandem repeats lie at residues S358–C362, S363–C367, and S368–C372. Positions S358–C372 are 3 X 5 AA tandem repeats of S-L-E-D-C. Positions L369–R434 are disordered. The segment covering T420–E429 has biased composition (acidic residues). The tract at residues E432–E456 is mediates interaction with STAT2 (and required for the recruitment of USP18). Position 480 is a phosphoserine (S480). The disordered stretch occupies residues E487–G522. Y525 is modified (phosphotyrosine).

It belongs to the type II cytokine receptor family. In terms of assembly, heterodimer with IFNAR1; forming the receptor for type I interferon. Interacts with the transcriptional factors STAT1 and STAT2. Interacts with JAK1. Interacts with USP18; indirectly via STAT2, it negatively regulates the assembly of the ternary interferon-IFNAR1-IFNAR2 complex and therefore type I interferon signaling. Phosphorylated on tyrosine residues upon interferon binding. Phosphorylation at Tyr-340 or Tyr-525 are sufficient to mediate interferon dependent activation of STAT1, STAT2 and STAT3 leading to antiproliferative effects on many different cell types. As to expression, expressed in the endometrium. Expressed in all tissues examined except conceptus at day 15 of pregnancy.

It localises to the cell membrane. In terms of biological role, together with IFNAR1, forms the heterodimeric receptor for type I interferons (including interferons alpha, beta, epsilon, omega and kappa). Type I interferon binding activates the JAK-STAT signaling cascade, resulting in transcriptional activation or repression of interferon-regulated genes that encode the effectors of the interferon response. Mechanistically, type I interferon-binding brings the IFNAR1 and IFNAR2 subunits into close proximity with one another, driving their associated Janus kinases (JAKs) (TYK2 bound to IFNAR1 and JAK1 bound to IFNAR2) to cross-phosphorylate one another. The activated kinases phosphorylate specific tyrosine residues on the intracellular domains of IFNAR1 and IFNAR2, forming docking sites for the STAT transcription factors (STAT1, STAT2 and STAT). STAT proteins are then phosphorylated by the JAKs, promoting their translocation into the nucleus to regulate expression of interferon-regulated genes. The sequence is that of Interferon alpha/beta receptor 2 (IFNAR2) from Ovis aries (Sheep).